The primary structure comprises 684 residues: DNA-directed RNA polymerase subunit beta' (684 aa).

4 residues coordinate Zn(2+): Cys69, Cys71, Cys87, and Cys90. Residues Asp489, Asp491, and Asp493 each contribute to the Mg(2+) site.

This sequence belongs to the RNA polymerase beta' chain family. RpoC1 subfamily. As to quaternary structure, in plastids the minimal PEP RNA polymerase catalytic core is composed of four subunits: alpha, beta, beta', and beta''. When a (nuclear-encoded) sigma factor is associated with the core the holoenzyme is formed, which can initiate transcription. Mg(2+) serves as cofactor. It depends on Zn(2+) as a cofactor.

The protein resides in the plastid. Its subcellular location is the chloroplast. It catalyses the reaction RNA(n) + a ribonucleoside 5'-triphosphate = RNA(n+1) + diphosphate. Functionally, DNA-dependent RNA polymerase catalyzes the transcription of DNA into RNA using the four ribonucleoside triphosphates as substrates. In Marchantia polymorpha (Common liverwort), this protein is DNA-directed RNA polymerase subunit beta'.